The chain runs to 235 residues: Sugar fermentation stimulation protein homolog (235 aa).

It belongs to the SfsA family.

The chain is Sugar fermentation stimulation protein homolog from Allorhizobium ampelinum (strain ATCC BAA-846 / DSM 112012 / S4) (Agrobacterium vitis (strain S4)).